The primary structure comprises 491 residues: F-box protein At3g59000 (491 aa).

Residues 1–49 (MDRVGSLPDELLSHILSFLTTKEAALTSLLSKRWRYLIAFVPNLAFDDI) enclose the F-box domain.

In terms of assembly, part of a SCF (ASK-cullin-F-box) protein ligase complex. Interacts with ASK4.

It is found in the nucleus. It functions in the pathway protein modification; protein ubiquitination. Its function is as follows. Component of SCF(ASK-cullin-F-box) E3 ubiquitin ligase complexes, which may mediate the ubiquitination and subsequent proteasomal degradation of target proteins. This is F-box protein At3g59000 from Arabidopsis thaliana (Mouse-ear cress).